Here is a 302-residue protein sequence, read N- to C-terminus: Glycine--tRNA ligase alpha subunit (302 aa).

It belongs to the class-II aminoacyl-tRNA synthetase family. In terms of assembly, tetramer of two alpha and two beta subunits.

The protein resides in the cytoplasm. It carries out the reaction tRNA(Gly) + glycine + ATP = glycyl-tRNA(Gly) + AMP + diphosphate. This is Glycine--tRNA ligase alpha subunit from Xanthomonas euvesicatoria pv. vesicatoria (strain 85-10) (Xanthomonas campestris pv. vesicatoria).